The following is a 253-amino-acid chain: Uroplakin-3b-like protein 1 (253 aa).

Residues 1 to 26 (MGLGRGQSPLLMALLLLLACLQMGMS) form the signal peptide. At 27–194 (LERISYVPQL…PGPQTAGTVV (168 aa)) the chain is on the extracellular side. Asparagine 78 and asparagine 130 each carry an N-linked (GlcNAc...) asparagine glycan. The helical transmembrane segment at 195–215 (IIAILSVLLAVLLAALLALLI) threads the bilayer. The Cytoplasmic segment spans residues 216–253 (FTWYDTCGSTPISGPGELVFVRKYDTHHMSRPSTVGGS).

The protein belongs to the uroplakin-3 family.

It localises to the membrane. In Bos taurus (Bovine), this protein is Uroplakin-3b-like protein 1.